Reading from the N-terminus, the 433-residue chain is MSLTHYSGLAAAVSMSLILTACGGQTPNSARFQPVFPGTVSRPVLSAQEAGRFTPQHYFAHGGEYAKPVADGWTPTPIDTSRVTAAYVVGPRAGVAGATHTSIQQAVNAALRQHPGQTRVYIKLLPGTYTGTVYVPEGAPPLTLFGAGDRPEQVVVSLALDSMMSPADYRARVNPHGQYQPADPAWYMYNACATKAGATINTTCSAVMWSQSNDFQLKNLTVVNALLDTVDSGTHQAVALRTDGDRVQLENVRLLSRQDTFFVNTSDRQNSYVTDHYSRAYIKDSYIEGDVDYVFGRATAVFDRVRFHTVSSRGSKEAYVFAPDSIPSVKYGFLVINSQLTGDNGYRGAQKAKLGRAWDQGAKQTGYLPGKTANGQLVIRDSTIDSSYDLANPWGAAATTDRPFKGNISPQRDLDDIHFNRLWEYNTQVLLHE.

The first 21 residues, 1-21, serve as a signal peptide directing secretion; the sequence is MSLTHYSGLAAAVSMSLILTA. Residue Cys22 is the site of N-palmitoyl cysteine attachment. Cys22 carries S-diacylglycerol cysteine lipidation. Residues 22 to 433 are Periplasmic-facing; sequence CGGQTPNSAR…EYNTQVLLHE (412 aa). Substrate is bound by residues Thr202 and Gln236. Residue Asp259 is the Proton donor of the active site. Asp292 functions as the Nucleophile in the catalytic mechanism. Positions 356 and 358 each coordinate substrate.

The protein belongs to the pectinesterase family.

The protein resides in the cell outer membrane. The catalysed reaction is [(1-&gt;4)-alpha-D-galacturonosyl methyl ester](n) + n H2O = [(1-&gt;4)-alpha-D-galacturonosyl](n) + n methanol + n H(+). It participates in glycan metabolism; pectin degradation; 2-dehydro-3-deoxy-D-gluconate from pectin: step 1/5. Functionally, probably involved in the degradation of methylated oligogalacturonides present in the periplasm. More active on methylated oligogalacturides than on pectin. This chain is Pectinesterase B, found in Dickeya dadantii (strain 3937) (Erwinia chrysanthemi (strain 3937)).